A 291-amino-acid polypeptide reads, in one-letter code: Inositol-1-monophosphatase (291 aa).

Mg(2+) is bound by residues Glu-83, Asp-104, Ile-106, and Asp-107. Glu-83 serves as a coordination point for substrate. Substrate contacts are provided by residues 106–109, Arg-206, and Asp-235; that span reads IDGT. Mg(2+) is bound at residue Asp-235.

This sequence belongs to the inositol monophosphatase superfamily. Requires Mg(2+) as cofactor.

It carries out the reaction a myo-inositol phosphate + H2O = myo-inositol + phosphate. This chain is Inositol-1-monophosphatase (suhB), found in Mycobacterium leprae (strain TN).